Reading from the N-terminus, the 241-residue chain is Putative CRISPR-associated endoribonuclease-like protein Cas6 (241 aa).

It belongs to the CRISPR-associated protein Cas6/Cse3/CasE family. Binds crRNA.

In terms of biological role, CRISPR (clustered regularly interspaced short palindromic repeat), is an adaptive immune system that provides protection against mobile genetic elements (viruses, transposable elements and conjugative plasmids). CRISPR clusters contain sequences complementary to antecedent mobile elements and target invading nucleic acids. CRISPR clusters are transcribed and processed into CRISPR RNA (crRNA), also called psiRNA (prokaryotic silencing) in this organism (Potential). This Pyrococcus furiosus (strain ATCC 43587 / DSM 3638 / JCM 8422 / Vc1) protein is Putative CRISPR-associated endoribonuclease-like protein Cas6 (cas6b).